Reading from the N-terminus, the 132-residue chain is Z-ring associated protein G (132 aa).

A helical transmembrane segment spans residues 1 to 21; that stretch reads MTWEYALIGLVVGIIIGAVAM. The tract at residues 95–132 is disordered; the sequence is FRNRLAESEASNDQAPVQMPRDYSEGASGLLRTGAKRD.

This sequence belongs to the ZapG family.

It localises to the cell inner membrane. Functionally, involved in cell division, cell envelope biogenesis and cell shape maintenance. The sequence is that of Z-ring associated protein G from Escherichia coli O157:H7.